The primary structure comprises 468 residues: Acetyl-CoA decarbonylase/synthase complex subunit gamma 2 (468 aa).

A 4Fe-4S domain is found at 1-60 (MKINSPLEAYKYLPQTNCGECGEATCMAFASKLIDRSGKPTQCPPLVKEKKFAKKLAELE). [4Fe-4S] cluster contacts are provided by cysteine 18, cysteine 21, cysteine 26, and cysteine 43.

In terms of assembly, heterodimer of delta and gamma chains. The ACDS complex is made up of alpha, epsilon, beta, gamma and delta chains with a probable stoichiometry of (alpha(2)epsilon(2))(4)-beta(8)-(gamma(1)delta(1))(8). Corrinoid is required as a cofactor. Requires [4Fe-4S] cluster as cofactor.

The catalysed reaction is 5,6,7,8-tetrahydrosarcinapterin + methyl-Co(III)-[corrinoid Fe-S protein] = 5-methyltetrahydrosarcinapterin + Co(I)-[corrinoid Fe-S protein] + H(+). The protein operates within one-carbon metabolism; methanogenesis from acetate. Its function is as follows. Part of a complex that catalyzes the reversible cleavage of acetyl-CoA, allowing growth on acetate as sole source of carbon and energy. The protein is Acetyl-CoA decarbonylase/synthase complex subunit gamma 2 of Methanosarcina thermophila.